A 266-amino-acid polypeptide reads, in one-letter code: Non-structural maintenance of chromosomes element 1 homolog (266 aa).

The tract at residues 1–102 (MQGSTRRAGA…SVSKMATDFA (102 aa)) is interaction with NSMCE3. Residues 191-232 (CNICHSLLIQGQSCETCGIRMHLPCVAKYFQSTAEPRCPHCN) form an RING-type; atypical zinc finger. Residues 246–266 (EKEREAGISKSSRKSLRTRQH) are disordered. Over residues 256 to 266 (SSRKSLRTRQH) the composition is skewed to basic residues.

This sequence belongs to the NSE1 family. Component of the SMC5-SMC6 complex which consists at least of SMC5, SMC6, NSMCE2, NSMCE1, NSMCE4A or EID3 and NSMCE3. NSMCE1, NSMCE4A or EID3 and NSMCE3 probably form a subcomplex that bridges the head domains of the SMC5-SMC6 heterodimer. Interacts with NSMCE3. Ubiquitinated.

The protein resides in the nucleus. Its subcellular location is the chromosome. The protein localises to the telomere. It carries out the reaction S-ubiquitinyl-[E2 ubiquitin-conjugating enzyme]-L-cysteine + [acceptor protein]-L-lysine = [E2 ubiquitin-conjugating enzyme]-L-cysteine + N(6)-ubiquitinyl-[acceptor protein]-L-lysine.. Its function is as follows. RING-type zinc finger-containing E3 ubiquitin ligase that assembles with melanoma antigen protein (MAGE) to catalyze the direct transfer of ubiquitin from E2 ubiquitin-conjugating enzyme to a specific substrate. Within MAGE-RING ubiquitin ligase complex, MAGE stimulates and specifies ubiquitin ligase activity likely through recruitment and/or stabilization of the E2 ubiquitin-conjugating enzyme at the E3:substrate complex. Involved in maintenance of genome integrity, DNA damage response and DNA repair. NSMCE3/MAGEG1 and NSMCE1 ubiquitin ligase are components of SMC5-SMC6 complex and may positively regulate homologous recombination-mediated DNA repair. This Rattus norvegicus (Rat) protein is Non-structural maintenance of chromosomes element 1 homolog (Nsmce1).